A 447-amino-acid chain; its full sequence is Asparagine--tRNA ligase (447 aa).

This sequence belongs to the class-II aminoacyl-tRNA synthetase family. In terms of assembly, homodimer.

The protein localises to the cytoplasm. It carries out the reaction tRNA(Asn) + L-asparagine + ATP = L-asparaginyl-tRNA(Asn) + AMP + diphosphate + H(+). This Lactococcus lactis subsp. cremoris (strain SK11) protein is Asparagine--tRNA ligase.